The chain runs to 188 residues: Elongation factor P (188 aa).

Lysine 34 is modified (N6-(3,6-diaminohexanoyl)-5-hydroxylysine).

This sequence belongs to the elongation factor P family. Post-translationally, may be beta-lysylated on the epsilon-amino group of Lys-34 by the combined action of EpmA and EpmB, and then hydroxylated on the C5 position of the same residue by EpmC (if this protein is present). Lysylation is critical for the stimulatory effect of EF-P on peptide-bond formation. The lysylation moiety may extend toward the peptidyltransferase center and stabilize the terminal 3-CCA end of the tRNA. Hydroxylation of the C5 position on Lys-34 may allow additional potential stabilizing hydrogen-bond interactions with the P-tRNA.

The protein resides in the cytoplasm. Its pathway is protein biosynthesis; polypeptide chain elongation. Involved in peptide bond synthesis. Alleviates ribosome stalling that occurs when 3 or more consecutive Pro residues or the sequence PPG is present in a protein, possibly by augmenting the peptidyl transferase activity of the ribosome. Modification of Lys-34 is required for alleviation. This chain is Elongation factor P, found in Pectobacterium carotovorum subsp. carotovorum (strain PC1).